The following is a 360-amino-acid chain: Phospho-N-acetylmuramoyl-pentapeptide-transferase (360 aa).

The next 10 helical transmembrane spans lie at 21–41, 73–93, 94–114, 132–152, 168–188, 199–219, 239–259, 263–283, 288–308, and 338–358; these read YITV…LWIG, TMGG…WANL, ANSY…IGFV, WKYF…YWLG, IMPQ…VGTG, GLAI…AWAT, VVVF…FNTY, VFMG…VAIL, FLLV…ILQV, and VIIR…VTLK.

This sequence belongs to the glycosyltransferase 4 family. MraY subfamily. Mg(2+) serves as cofactor.

The protein resides in the cell inner membrane. It carries out the reaction UDP-N-acetyl-alpha-D-muramoyl-L-alanyl-gamma-D-glutamyl-meso-2,6-diaminopimeloyl-D-alanyl-D-alanine + di-trans,octa-cis-undecaprenyl phosphate = di-trans,octa-cis-undecaprenyl diphospho-N-acetyl-alpha-D-muramoyl-L-alanyl-D-glutamyl-meso-2,6-diaminopimeloyl-D-alanyl-D-alanine + UMP. It participates in cell wall biogenesis; peptidoglycan biosynthesis. In terms of biological role, catalyzes the initial step of the lipid cycle reactions in the biosynthesis of the cell wall peptidoglycan: transfers peptidoglycan precursor phospho-MurNAc-pentapeptide from UDP-MurNAc-pentapeptide onto the lipid carrier undecaprenyl phosphate, yielding undecaprenyl-pyrophosphoryl-MurNAc-pentapeptide, known as lipid I. The chain is Phospho-N-acetylmuramoyl-pentapeptide-transferase from Haemophilus influenzae (strain 86-028NP).